We begin with the raw amino-acid sequence, 203 residues long: Protein GrpE 2 (203 aa).

Basic and acidic residues predominate over residues Met-1–Ala-12. The segment at Met-1 to Ala-64 is disordered. A compositionally biased stretch (low complexity) spans Gly-45–Pro-56.

The protein belongs to the GrpE family. As to quaternary structure, homodimer.

It localises to the cytoplasm. In terms of biological role, participates actively in the response to hyperosmotic and heat shock by preventing the aggregation of stress-denatured proteins, in association with DnaK and GrpE. It is the nucleotide exchange factor for DnaK and may function as a thermosensor. Unfolded proteins bind initially to DnaJ; upon interaction with the DnaJ-bound protein, DnaK hydrolyzes its bound ATP, resulting in the formation of a stable complex. GrpE releases ADP from DnaK; ATP binding to DnaK triggers the release of the substrate protein, thus completing the reaction cycle. Several rounds of ATP-dependent interactions between DnaJ, DnaK and GrpE are required for fully efficient folding. In Streptomyces avermitilis (strain ATCC 31267 / DSM 46492 / JCM 5070 / NBRC 14893 / NCIMB 12804 / NRRL 8165 / MA-4680), this protein is Protein GrpE 2.